Consider the following 227-residue polypeptide: 27 kDa glycoprotein (227 aa).

Residues 1 to 17 (MMWKTVLITIFAAGVLA) form the signal peptide. Residues Asn-118 and Asn-173 are each glycosylated (N-linked (GlcNAc...) asparagine).

Belongs to the UPF0408 family. As to expression, expressed in the subesophageal body, fat bodies, hemocytes, midgut and Malpighian tubules. Not expressed in silk glands.

The protein localises to the secreted. The polypeptide is 27 kDa glycoprotein (Bombyx mori (Silk moth)).